The primary structure comprises 68 residues: Negative regulator of P-body association (68 aa).

Positions 1 to 68 (MGDQPCASGR…LKSHPPPPEK (68 aa)) are disordered.

In terms of assembly, interacts with mRNA decapping proteins DCP1A, DCP2 and EDC4.

It is found in the cytoplasm. The protein resides in the P-body. Its function is as follows. Promotes dispersal of P-body components and is likely to play a role in the mRNA decapping process. In Homo sapiens (Human), this protein is Negative regulator of P-body association.